A 451-amino-acid polypeptide reads, in one-letter code: Chromosomal replication initiator protein DnaA (451 aa).

Positions 1 to 71 (MSEQEIWKKV…QTIMKDVIGY (71 aa)) are domain I, interacts with DnaA modulators. The interval 71–112 (YEVEPKFFTAEQLAELDETSRKSNTPSEPQRQIIEYGHEGTD) is domain II. Residues 113 to 329 (QFNTHNTFDT…GALTRLLAYS (217 aa)) are domain III, AAA+ region. Residues glycine 157, glycine 159, lysine 160, and threonine 161 each coordinate ATP. The segment at 330–451 (KLQGRPITTE…EDLEKEIRNQ (122 aa)) is domain IV, binds dsDNA.

It belongs to the DnaA family. In terms of assembly, oligomerizes as a right-handed, spiral filament on DNA at oriC.

It localises to the cytoplasm. Plays an essential role in the initiation and regulation of chromosomal replication. ATP-DnaA binds to the origin of replication (oriC) to initiate formation of the DNA replication initiation complex once per cell cycle. Binds the DnaA box (a 9 base pair repeat at the origin) and separates the double-stranded (ds)DNA. Forms a right-handed helical filament on oriC DNA; dsDNA binds to the exterior of the filament while single-stranded (ss)DNA is stabiized in the filament's interior. The ATP-DnaA-oriC complex binds and stabilizes one strand of the AT-rich DNA unwinding element (DUE), permitting loading of DNA polymerase. After initiation quickly degrades to an ADP-DnaA complex that is not apt for DNA replication. Binds acidic phospholipids. This Staphylococcus haemolyticus (strain JCSC1435) protein is Chromosomal replication initiator protein DnaA.